A 509-amino-acid chain; its full sequence is Cobyric acid synthase (509 aa).

The 198-residue stretch at 262 to 459 (EIKVGIIKLP…IHGIFENDIW (198 aa)) folds into the GATase cobBQ-type domain. The Nucleophile role is filled by C343. H451 is an active-site residue.

Belongs to the CobB/CobQ family. CobQ subfamily.

It functions in the pathway cofactor biosynthesis; adenosylcobalamin biosynthesis. Its function is as follows. Catalyzes amidations at positions B, D, E, and G on adenosylcobyrinic A,C-diamide. NH(2) groups are provided by glutamine, and one molecule of ATP is hydrogenolyzed for each amidation. This chain is Cobyric acid synthase, found in Prochlorococcus marinus (strain MIT 9312).